We begin with the raw amino-acid sequence, 685 residues long: MNALSKVRVYELSKELGISSKDLISLLKDEFSIEVKNHMSVVEEEDALLIKEFYGESKEENTEENIEEKYGDLQEAQIKVVKKNRKNKVKKNDDENDAQEEIVIEMEDTITVKELSDRLKKTYAEVIKELMMMGVMAAVNQEIDFEAAEKLGEKFEAIVVQREVDVLEESVEQYIEEEEEEGTVKRPPVVTVMGHVDHGKTSLLDAIRKEEVAASEAGGITQHIGAYTITINGEKITFLDTPGHEAFTSMRARGAQITDIVILVVAADDGIMPQTEEAINHCKAANVPMVVAINKMDRAGANPDKVKQQLAEKGLVAEDWGGDTITVPVSAHTKEGIDTLLEMVLLTAEMQELKSNPNRKAKGTVVDAKLDKGRGPVASLIVQNGTLNSGDSIIVGTTYGRIRAMFDDKGRKINSAGPSIPAEILGLSEVPSAGDRFYVVKDEKTAREMAEKRKEKTRSEYLATSKVSLEDLYSQIKEGKIKELNIIVKADVQGTIEAIRQSLEKLSTDEVKVRVIHGGVGAITETDVILANASSAVIIGFNVRPDSNAIVSAEKENVEIKTYRVIYSAIEDIKKAMIGMLEPEYKEVIQGRAEVRMTYKISNVGTVAGCYVQSGKITRNSGVRIIRDGIVIFESELSSLKRFKDDAKEVAAGYECGIMVEKFNDIKEGDTIEAYTMETIKKHTL.

The tr-type G domain occupies 185–354; the sequence is KRPPVVTVMG…LLTAEMQELK (170 aa). Residues 194-201 form a G1 region; that stretch reads GHVDHGKT. 194–201 lines the GTP pocket; the sequence is GHVDHGKT. The segment at 219–223 is G2; the sequence is GITQH. Positions 240 to 243 are G3; it reads DTPG. GTP contacts are provided by residues 240-244 and 294-297; these read DTPGH and NKMD. Residues 294 to 297 form a G4 region; sequence NKMD. The G5 stretch occupies residues 330-332; the sequence is SAH.

The protein belongs to the TRAFAC class translation factor GTPase superfamily. Classic translation factor GTPase family. IF-2 subfamily.

It is found in the cytoplasm. Its function is as follows. One of the essential components for the initiation of protein synthesis. Protects formylmethionyl-tRNA from spontaneous hydrolysis and promotes its binding to the 30S ribosomal subunits. Also involved in the hydrolysis of GTP during the formation of the 70S ribosomal complex. The polypeptide is Translation initiation factor IF-2 (Clostridium tetani (strain Massachusetts / E88)).